Consider the following 387-residue polypeptide: S-adenosylmethionine synthase (387 aa).

Residue H16 participates in ATP binding. D18 contributes to the Mg(2+) binding site. E44 is a K(+) binding site. E57 and Q100 together coordinate L-methionine. A flexible loop region spans residues 100–110; sequence QSPDIAQGVDR. Residues 167 to 169, 232 to 233, D241, 247 to 248, A264, and K268 each bind ATP; these read DAK, RF, and RK. An L-methionine-binding site is contributed by D241. K272 is an L-methionine binding site.

This sequence belongs to the AdoMet synthase family. Homotetramer; dimer of dimers. Mg(2+) is required as a cofactor. K(+) serves as cofactor.

It is found in the cytoplasm. It carries out the reaction L-methionine + ATP + H2O = S-adenosyl-L-methionine + phosphate + diphosphate. Its pathway is amino-acid biosynthesis; S-adenosyl-L-methionine biosynthesis; S-adenosyl-L-methionine from L-methionine: step 1/1. Its function is as follows. Catalyzes the formation of S-adenosylmethionine (AdoMet) from methionine and ATP. The overall synthetic reaction is composed of two sequential steps, AdoMet formation and the subsequent tripolyphosphate hydrolysis which occurs prior to release of AdoMet from the enzyme. The protein is S-adenosylmethionine synthase of Cupriavidus necator (strain ATCC 17699 / DSM 428 / KCTC 22496 / NCIMB 10442 / H16 / Stanier 337) (Ralstonia eutropha).